A 75-amino-acid chain; its full sequence is Penaeidin-3n (75 aa).

The signal sequence occupies residues 1 to 19 (MRLVVCLVFLASFALVCQG). Pyrrolidone carboxylic acid is present on Gln-20. Intrachain disulfides connect Cys-44–Cys-59 and Cys-48–Cys-66. The residue at position 74 (Ser-74) is a Serine amide.

Belongs to the penaeidin family.

The protein localises to the cytoplasmic granule. Its function is as follows. Antibacterial and antifungal activity. Presents chitin-binding activity. This chain is Penaeidin-3n, found in Penaeus setiferus (Atlantic white shrimp).